Consider the following 549-residue polypeptide: MPLSTAGVLSSASTASNRSRNRPRYRTKALSSEVDESLFGAIKPLTRSDSPIVLLRDKHAIRKTLTALGLDHKPETIQLITRDMVRELIIPTKDPSGQSLIMSPEEFERIKWASHVLTKEELEAREQAFKKEKEAIVDTVTTRKKIMKQKEMVWRNNRKLSDLEEVAKERAQNLLQRANQLRMEQEEELKDMKKIILNAKCHAIRDAQILEKQLIQKELDAEEKRLDQMMEVERQKSVQRQEELDRKRREERIRGRRHIVEQMEKNQEERSLLAEQREQEKEQMLEYMEKLQEEDLRDLEQRHQQKLKMQAEIKRINDENQRQKAELLAQEKLADQMVMEFTKKKMAREAEFEAEQERIRREKEKEIARLRAMQEKAQDYQAEQDALRAKRNQEVADREWRRKEKENAQKKMETEAKLRKSRLEQVAFKEHTLAVQVQRDRDEFERILRAQREQIEKERLEEEKKATGRLQHANELRRQVRENQQKQVQARIATFDEGRRLKEEAQKRRERIEDIKRKKLEELRATGLPEKYCIEAERKANIPVNTSVN.

Residues 1 to 27 (MPLSTAGVLSSASTASNRSRNRPRYRT) form a disordered region. 2 coiled-coil regions span residues 119–232 (KEEL…MMEV) and 259–393 (IVEQ…KRNQ). The interval 391–416 (RNQEVADREWRRKEKENAQKKMETEA) is disordered.

The protein belongs to the CFAP45 family. Microtubule inner protein component of sperm flagellar doublet microtubules. Interacts with AK8; dimerization with AK8 may create a cavity at the interface of the dimer that can accommodate AMP. Interacts with CFAP52. Interacts with ENKUR. Directly interacts with DNALI1. Interacts with DNAH11. Interacts with DNAI1. As to expression, expressed in trachea multiciliated cells.

It localises to the cytoplasm. It is found in the cytoskeleton. Its subcellular location is the cilium axoneme. The protein resides in the flagellum axoneme. The protein localises to the cell projection. It localises to the cilium. It is found in the flagellum. Functionally, microtubule inner protein (MIP) part of the dynein-decorated doublet microtubules (DMTs) in cilia axoneme, which is required for motile cilia beating. It is an AMP-binding protein that may facilitate dynein ATPase-dependent ciliary and flagellar beating via adenine nucleotide homeostasis. May function as a donor of AMP to AK8 and hence promote ADP production. The polypeptide is Cilia- and flagella-associated protein 45 (Bos taurus (Bovine)).